A 139-amino-acid polypeptide reads, in one-letter code: GPI-anchored protein 53 (139 aa).

A signal peptide spans 1 to 17; the sequence is MKFQLLTLVSIATTTLA. 2 stretches are compositionally biased toward low complexity: residues 57 to 69 and 77 to 101; these read TITSSSSTTTTTT and TSTTSASSTTTTSTKSNSTSPSSSS. Residues 57-115 are disordered; that stretch reads TITSSSSTTTTTTAKKDKKTTSTTSASSTTTTSTKSNSTSPSSSSSKKHKSETASITKT. Asn-93 carries N-linked (GlcNAc...) asparagine glycosylation. Gly-116 carries the GPI-anchor amidated glycine lipid modification. Residues 117–139 constitute a propeptide, removed in mature form; the sequence is GADSVAAAAAVGGPILAALALLL.

It is found in the cell membrane. The polypeptide is GPI-anchored protein 53 (PGA53) (Candida albicans (strain SC5314 / ATCC MYA-2876) (Yeast)).